Consider the following 336-residue polypeptide: uncharacterized protein (336 aa).

It belongs to the GppA/Ppx family.

This is an uncharacterized protein from Streptomyces coelicolor (strain ATCC BAA-471 / A3(2) / M145).